A 433-amino-acid chain; its full sequence is Histidine--tRNA ligase (433 aa).

This sequence belongs to the class-II aminoacyl-tRNA synthetase family. In terms of assembly, homodimer.

It localises to the cytoplasm. It catalyses the reaction tRNA(His) + L-histidine + ATP = L-histidyl-tRNA(His) + AMP + diphosphate + H(+). The polypeptide is Histidine--tRNA ligase (Blochmanniella floridana).